The primary structure comprises 546 residues: Peptidoglycan transport ATP-binding protein YejF (546 aa).

ABC transporter domains are found at residues 12–261 (VRDL…RHLL) and 291–530 (IKAG…KALL). Residues 46–53 (GESGSGKS) and 323–330 (GESGSGKT) contribute to the ATP site.

Belongs to the ABC transporter superfamily. In terms of assembly, the complex is composed of one ATP-binding protein (YejF), two transmembrane proteins (YejB and YejE) and a solute-binding protein (YepA or YejA).

The protein localises to the cell inner membrane. Functionally, part of the ABC transporter complex YejBEF-YepA involved in the uptake of muropeptides, the breakdown products of cell wall peptidoglycan. The import of muropeptides into the cell enables peptidoglycan recycling, which is vital for cell wall integrity in this bacterium. Is also probably part of the ABC transporter complex YejABEF, which is likely involved in broad-spectrum peptide import. Responsible for energy coupling to the transport system. This is Peptidoglycan transport ATP-binding protein YejF from Agrobacterium fabrum (strain C58 / ATCC 33970) (Agrobacterium tumefaciens (strain C58)).